The sequence spans 302 residues: MFKRKSTAELAAQMAKLAGNKGGFSSEDKGEWKLKLDNAGNGQAVIRFLPSKNDEQAPFAILVNHGFKKNGKWYIENCSSTHGDYDSCPVCQYISKNDLYNTDNKEYGLVKRKTSYWANILVVKDPAAPENEGKVFKYRFGKKIWDKINAMIAVDVEMGETPVDVTCPWEGANFVLKVKQVSGFSNYDESKFLNQSAIPNIDDESFQKELFEQMVDLSEMTSKDKFKSFEELSTKFSQVMGTAAMGGAAATAAKKADKVADDLDAFNVDDFNTKTEDDFMSSSSGSSSSADDTDLDDLLNDL.

An LAST region spans residues Lys-3–Thr-7. Zn(2+) is bound by residues His-65, Cys-78, Cys-88, and Cys-91. The disordered stretch occupies residues Thr-273–Leu-302. The span at Met-280–Ala-290 shows a compositional bias: low complexity. Positions Asp-291–Leu-302 are enriched in acidic residues.

Belongs to the Tequatrovirus single-stranded DNA-binding protein family. As to quaternary structure, homodimer in the absence of DNA, monomer when binding DNA. Interacts with the DNA helicase assembly protein; a ternary complex between the helicase assembly protein, the single-stranded DNA-binding protein and ssDNA is an obligatory intermediate in the helicase loading mechanism. Part of the replicase complex that includes the DNA polymerase, the polymerase clamp, the clamp loader complex, the single-stranded DNA binding protein, the primase, the DnaB-like SF4 replicative helicase and the helicase assembly factor. Interacts (via C-terminus) with the viral SF1 dDA helicase. Interacts with the viral SF2 UvsW repair helicase.

Functionally, single-stranded DNA-binding protein that participates in viral DNA replication, recombination, and repair. Coats the lagging-strand ssDNA as the replication fork advances. Stimulates the activities of viral DNA polymerase and DnaB-like SF4 replicative helicase, probably via its interaction with the helicase assembly factor. Together with DnaB-like SF4 replicative helicase and the helicase assembly factor, promotes pairing of two homologous DNA molecules containing complementary single-stranded regions and mediates homologous DNA strand exchange. Also promotes the formation of joint molecules. mRNA specific autogenous translational repressor. This Escherichia coli (Bacteriophage T2) protein is Single-stranded DNA-binding protein.